Reading from the N-terminus, the 537-residue chain is MGISKPLPLFSILVLYFSLYTITPTSSLASLQDQFINCVQRNTHVYFPLEKTFFAPTKNVSMFSQVLESTAQNLRFLKKSMPKPGFIFSPIHESHVQASIICSKKLRMHLRVRSGGHDYEGLSYVSQIDKPFILMDLSKMRQVNINIQDNSAWVQSGATVGELYYRIAEKSKVHGFPAGLCSSLGIGGHITGGAYGSMMRKYGLGADNVLDAKIVDANGKLLDRAAMGEDTFWAIRGGAGGSFGIILAWKIKLVPVPKTVTVFTVTKTLQQDVGNKIISKWQRVADKLVEELFIRVLFNVAGTGGNKTVTTSYNALFLGGKGTLMNVMKKSFPELGLTFKDCIEMSWLESIAYISGFPTHTPTNVLLQGKSPFPKVSFKAKSDFVKTPIPESGLQGIFKKLLKEDIPLMIWNPYGGMMAKIPESQIPFPHRKGVLFKVQYVTSWLDSDKRPSRHINWIRDLYSYMTPYVSSNPREAYVNYRDLDLGRNTKDVKTCIKQAQVWGANYFKNNFNRLMMIKAKVDPENFFRHEQSIPPMM.

An N-terminal signal peptide occupies residues 1–27 (MGISKPLPLFSILVLYFSLYTITPTSS). Cys-38 and Cys-102 are joined by a disulfide. N-linked (GlcNAc...) asparagine glycosylation occurs at Asn-59. An FAD-binding PCMH-type domain is found at 80–256 (SMPKPGFIFS…LAWKIKLVPV (177 aa)). The 6-(S-cysteinyl)-8alpha-(pros-histidyl)-FAD (His-Cys) cross-link spans 117-181 (HDYEGLSYVS…KVHGFPAGLC (65 aa)). Residue Asn-306 is glycosylated (N-linked (GlcNAc...) asparagine).

This sequence belongs to the oxygen-dependent FAD-linked oxidoreductase family. FAD serves as cofactor. In terms of processing, the FAD cofactor is bound via a bicovalent 6-S-cysteinyl, 8alpha-N1-histidyl FAD linkage.

Its subcellular location is the secreted. The protein resides in the cell wall. This chain is Berberine bridge enzyme-like 26, found in Arabidopsis thaliana (Mouse-ear cress).